A 146-amino-acid chain; its full sequence is MKLHELHSAEGSRRNRKRVGRGTSSGYGKTSGRGQKGQLARQGGHTRLGFEGGQMPLFRTMPKRGFKNVNRKEYAIVNLDDLNKFEDGSEVTVATLKENGLVKKELSGVKLLGNGELKVKLTVKVNKVSAAAKEAVEAAGGTVEVI.

Over residues 1–13 (MKLHELHSAEGSR) the composition is skewed to basic and acidic residues. A disordered region spans residues 1-55 (MKLHELHSAEGSRRNRKRVGRGTSSGYGKTSGRGQKGQLARQGGHTRLGFEGGQM). Gly residues predominate over residues 23–35 (TSSGYGKTSGRGQ).

It belongs to the universal ribosomal protein uL15 family. In terms of assembly, part of the 50S ribosomal subunit.

Binds to the 23S rRNA. The chain is Large ribosomal subunit protein uL15 from Lactobacillus acidophilus (strain ATCC 700396 / NCK56 / N2 / NCFM).